A 558-amino-acid chain; its full sequence is Putative transposase for insertion sequence IS1162 (558 aa).

One can recognise an HTH IS408-type domain in the interval 11 to 93 (IKECLRLKFE…PDLITIHREL (83 aa)). Residues 23–44 (LSHEKIARALQLSKGVVSKYVT) constitute a DNA-binding region (H-T-H motif). In terms of domain architecture, Integrase catalytic spans 139–336 (QQHRAGEKLF…HPYEVVTFKR (198 aa)). The disordered stretch occupies residues 486 to 558 (QGLDQQPLPK…AAGQPQPELR (73 aa)).

It belongs to the transposase IS21/IS408/IS1162 family.

Its function is as follows. Required for the transposition of the insertion element. The sequence is that of Putative transposase for insertion sequence IS1162 from Pseudomonas fluorescens.